The sequence spans 351 residues: Peptide chain release factor 1 (351 aa).

N5-methylglutamine is present on Q233.

Belongs to the prokaryotic/mitochondrial release factor family. Post-translationally, methylated by PrmC. Methylation increases the termination efficiency of RF1.

It is found in the cytoplasm. Peptide chain release factor 1 directs the termination of translation in response to the peptide chain termination codons UAG and UAA. The sequence is that of Peptide chain release factor 1 from Treponema pallidum subsp. pallidum (strain SS14).